The chain runs to 299 residues: UPF0282 protein TK1681 (299 aa).

It belongs to the UPF0282 family.

The polypeptide is UPF0282 protein TK1681 (Thermococcus kodakarensis (strain ATCC BAA-918 / JCM 12380 / KOD1) (Pyrococcus kodakaraensis (strain KOD1))).